The following is a 414-amino-acid chain: TBC domain-containing protein C1778.09 (414 aa).

The region spanning 158 to 343 (GIPDCWRSIA…RIWDLLFLLG (186 aa)) is the Rab-GAP TBC domain.

It is found in the cytoplasm. The protein resides in the nucleus. The polypeptide is TBC domain-containing protein C1778.09 (Schizosaccharomyces pombe (strain 972 / ATCC 24843) (Fission yeast)).